Here is a 384-residue protein sequence, read N- to C-terminus: 8-amino-7-oxononanoate synthase (384 aa).

Arg-21 contributes to the substrate binding site. Residue 108-109 participates in pyridoxal 5'-phosphate binding; the sequence is GF. His-133 lines the substrate pocket. 3 residues coordinate pyridoxal 5'-phosphate: Ser-179, His-207, and Thr-233. Position 236 is an N6-(pyridoxal phosphate)lysine (Lys-236). Thr-352 serves as a coordination point for substrate.

The protein belongs to the class-II pyridoxal-phosphate-dependent aminotransferase family. BioF subfamily. As to quaternary structure, homodimer. Pyridoxal 5'-phosphate serves as cofactor.

It catalyses the reaction 6-carboxyhexanoyl-[ACP] + L-alanine + H(+) = (8S)-8-amino-7-oxononanoate + holo-[ACP] + CO2. It functions in the pathway cofactor biosynthesis; biotin biosynthesis. Its function is as follows. Catalyzes the decarboxylative condensation of pimeloyl-[acyl-carrier protein] and L-alanine to produce 8-amino-7-oxononanoate (AON), [acyl-carrier protein], and carbon dioxide. In Escherichia coli O7:K1 (strain IAI39 / ExPEC), this protein is 8-amino-7-oxononanoate synthase.